Consider the following 815-residue polypeptide: Echinoderm microtubule-associated protein-like 1 (815 aa).

Residues 31-72 (SMEVTDRIASLEQRVQMQEDDIQLLKSALADVVRRLNITEEQ) adopt a coiled-coil conformation. Residues 77 to 179 (NRKGPTKARP…NSESKPKEPV (103 aa)) form a disordered region. Residues 92 to 101 (PLRTTVNNGT) show a composition bias toward polar residues. Ser113 is subject to Phosphoserine. The segment covering 126–138 (TKSNIKRTSSSER) has biased composition (polar residues). The segment covering 143–153 (GRRESNGDSRG) has biased composition (basic and acidic residues). Low complexity predominate over residues 156-168 (NRTGSTSSSSSGK). The interval 176–815 (KEPVFSAEEG…DTSIMQWRVI (640 aa)) is tandem atypical propeller in EMLs. WD repeat units lie at residues 261 to 310 (EQLQ…IWDS), 315 to 358 (TLHV…VWDW), 363 to 400 (KLAD…FWTL), 409 to 446 (QGLF…VWGK), 450 to 489 (RISY…SWSG), 493 to 530 (KLRK…LQGT), 535 to 572 (FTPI…LWDA), 578 to 613 (VWDK…VFDT), 617 to 655 (DLVT…IYGV), 664 to 701 (RVGK…YWVP), 709 to 768 (SVET…LFSY), and 775 to 814 (APSH…QWRV).

It belongs to the WD repeat EMAP family. In terms of assembly, homotrimer; self-association is mediated by the N-terminal coiled coil. Does not interact with EML3. Binds repolymerizing microtubules. Binds unpolymerized tubulins via its WD repeat region. Interacts with TASOR. In terms of tissue distribution, ubiquitous; expressed in most tissues with the exception of thymus and peripheral blood lymphocytes.

It is found in the cytoplasm. Its subcellular location is the perinuclear region. The protein localises to the cytoskeleton. Modulates the assembly and organization of the microtubule cytoskeleton, and probably plays a role in regulating the orientation of the mitotic spindle and the orientation of the plane of cell division. Required for normal proliferation of neuronal progenitor cells in the developing brain and for normal brain development. Does not affect neuron migration per se. The sequence is that of Echinoderm microtubule-associated protein-like 1 (EML1) from Homo sapiens (Human).